The following is a 449-amino-acid chain: PC-esterase domain-containing protein 1A (449 aa).

Belongs to the PC-esterase family.

In Mus musculus (Mouse), this protein is PC-esterase domain-containing protein 1A (Pced1a).